The primary structure comprises 127 residues: Fluoride-specific ion channel FluC (127 aa).

The next 4 helical transmembrane spans lie at 4-24 (SLLA…GLGM), 35-55 (PGTL…IAFF), 68-88 (LLIT…AEVV), and 96-116 (ILWA…MTAA). Na(+) contacts are provided by glycine 75 and threonine 78.

Belongs to the fluoride channel Fluc/FEX (TC 1.A.43) family.

It is found in the cell inner membrane. The catalysed reaction is fluoride(in) = fluoride(out). With respect to regulation, na(+) is not transported, but it plays an essential structural role and its presence is essential for fluoride channel function. Fluoride-specific ion channel. Important for reducing fluoride concentration in the cell, thus reducing its toxicity. This is Fluoride-specific ion channel FluC from Pseudomonas putida (strain W619).